The following is a 501-amino-acid chain: MALYLSSSRLITFLSFILLLSNGFSSSSSRPSIHHRHHLDNHNYKDALSKSILFFEGQRSGKLPPNQRMTWRSNSGLSDGSALNVDLVGGYYDAGDNMKFGFPMAFTTTMLSWSLIEFGGLMKSELPNAKDAIRWATDFLLKATSHPDTIYVQVGDPNMDHACWERPEDMDTPRSVFKVDKNNPGSDIAGEIAAALAAASIVFRKCDPSYSNHLLQRAITVFTFADKYRGPYSAGLAPEVCPFYCSYSGYQDELLWGAAWLQKATNNPTYLNYIKANGQILGADEFDNMFSWDNKHVGARILLSKEFLIQKVKSLEEYKEHADSFICSVLPGASSSQYTPGGLLFKMGESNMQYVTSTSFLLLTYAKYLTSARTVAYCGGSVVTPARLRSIAKKQVDYLLGGNPLKMSYMVGYGLKYPRRIHHRGSSLPSVAVHPTRIQCHDGFSLFTSQSPNPNDLVGAVVGGPDQNDQFPDERSDYGRSEPATYINAPLVGALAYLARS.

The first 29 residues, 1-29, serve as a signal peptide directing secretion; sequence MALYLSSSRLITFLSFILLLSNGFSSSSS. Residue D96 is the Nucleophile of the active site. Catalysis depends on residues H422, D473, and E482.

Belongs to the glycosyl hydrolase 9 (cellulase E) family.

It localises to the secreted. The enzyme catalyses Endohydrolysis of (1-&gt;4)-beta-D-glucosidic linkages in cellulose, lichenin and cereal beta-D-glucans.. In Arabidopsis thaliana (Mouse-ear cress), this protein is Endoglucanase 1 (CEL2).